A 98-amino-acid polypeptide reads, in one-letter code: Dehydrin HIRD11 (98 aa).

Residues 1-98 (MAGLINKIGD…HSSSSDSDSD (98 aa)) form a disordered region. A compositionally biased stretch (basic and acidic residues) spans 19–72 (KEGEHKKEEEHKKHVDEHKSGEHKEGIVDKIKDKIHGGEGKSHDGEGKSHDGEK). The segment covering 73–82 (KKKKDKKEKK) has biased composition (basic residues).

This sequence belongs to the KS-type dehydrin family. As to quaternary structure, interacts with PXL1. In terms of processing, phosphorylated in vivo. Phosphorylated in vitro by PXL1. As to expression, highly expressed in the cambial zone of the stem vasculature (at protein level). Expressed in roots, rosettes leaves, stems, cauline leaves, flowers and siliques.

It localises to the cytoplasm. It is found in the nucleus. Intrinsically disordered and metal-binding protein. Binds to the divalent cations cobalt, nickel, copper and zinc, but not to magnesium, calcium, manganese or cadmium. Binding to metal ions decreases disordered state, decreases susceptibility to trypsin and promotes self-association. Can reduce the formation of reactive oxygen species (ROS) in a copper-ascorbate in vitro system. The protein is Dehydrin HIRD11 of Arabidopsis thaliana (Mouse-ear cress).